The following is a 97-amino-acid chain: Early nodulin-75 (97 aa).

The interval 1–97 is disordered; sequence RPHVHPPPEH…PEYQPPHEKP (97 aa). Composition is skewed to pro residues over residues 9–22 and 31–43; these read EHQPPLEHPPPEYQ and VHPPPEYQPPYQK. The span at 76-97 shows a compositional bias: basic and acidic residues; that stretch reads PPHEKPPHEHPPPEYQPPHEKP.

Belongs to the nodulin 75 family.

In terms of biological role, involved in early stages of root nodule development. This is Early nodulin-75 (ENOD2) from Medicago sativa (Alfalfa).